The primary structure comprises 460 residues: NADH-ubiquinone oxidoreductase chain 4 (460 aa).

13 consecutive transmembrane segments (helical) span residues 22–42, 59–79, 94–113, 117–139, 148–168, 195–215, 231–251, 258–278, 286–306, 310–330, 343–362, 394–414, and 436–456; these read WLWS…LSWF, IDPL…LMIL, RIYI…AFSA, ILFY…RWGN, TYFL…LLFM, FWWT…GVHL, ILAA…IIML, MAYP…SICL, MIAY…LIQT, FAGA…LFCL, LLLA…WWLL, ILLT…MFLM, and LLLT…ELIW.

This sequence belongs to the complex I subunit 4 family.

It is found in the mitochondrion membrane. The enzyme catalyses a ubiquinone + NADH + 5 H(+)(in) = a ubiquinol + NAD(+) + 4 H(+)(out). Its function is as follows. Core subunit of the mitochondrial membrane respiratory chain NADH dehydrogenase (Complex I) that is believed to belong to the minimal assembly required for catalysis. Complex I functions in the transfer of electrons from NADH to the respiratory chain. The immediate electron acceptor for the enzyme is believed to be ubiquinone. This Scyliorhinus canicula (Small-spotted catshark) protein is NADH-ubiquinone oxidoreductase chain 4 (MTND4).